The sequence spans 124 residues: MIQTILAVSIAGIAGTLLRFATGTWVSANWPRYFYAATLAVNIVGCLIIGVLYGLFLLRPEVPIEIRAGLIVGFVGGLTTFSSFSLDTLRLLESGQVPLALGYAGISVFGGLLATWAGLSLTRL.

Transmembrane regions (helical) follow at residues 5–25, 38–58, 69–89, and 99–119; these read ILAV…TGTW, TLAV…LFLL, GLIV…LDTL, and LALG…WAGL. 2 residues coordinate Na(+): Gly-76 and Thr-79.

It belongs to the fluoride channel Fluc/FEX (TC 1.A.43) family.

Its subcellular location is the cell inner membrane. It catalyses the reaction fluoride(in) = fluoride(out). Na(+) is not transported, but it plays an essential structural role and its presence is essential for fluoride channel function. Fluoride-specific ion channel. Important for reducing fluoride concentration in the cell, thus reducing its toxicity. The sequence is that of Fluoride-specific ion channel FluC from Pseudomonas syringae pv. syringae (strain B728a).